The sequence spans 646 residues: Threonine--tRNA ligase (646 aa).

Residues 1-63 (MADLSIIFPD…SSGGSIEIIT (63 aa)) enclose the TGS domain. Residues 244–541 (DHRKLGKELG…LIEEYKGAFP (298 aa)) form a catalytic region. Positions 337, 388, and 518 each coordinate Zn(2+).

This sequence belongs to the class-II aminoacyl-tRNA synthetase family. Homodimer. Requires Zn(2+) as cofactor.

It is found in the cytoplasm. It catalyses the reaction tRNA(Thr) + L-threonine + ATP = L-threonyl-tRNA(Thr) + AMP + diphosphate + H(+). Functionally, catalyzes the attachment of threonine to tRNA(Thr) in a two-step reaction: L-threonine is first activated by ATP to form Thr-AMP and then transferred to the acceptor end of tRNA(Thr). Also edits incorrectly charged L-seryl-tRNA(Thr). This chain is Threonine--tRNA ligase, found in Oceanobacillus iheyensis (strain DSM 14371 / CIP 107618 / JCM 11309 / KCTC 3954 / HTE831).